The primary structure comprises 507 residues: Cysteine--tRNA ligase (507 aa).

C29 contributes to the Zn(2+) binding site. Residues 31–41 carry the 'HIGH' region motif; that stretch reads PTVYDVPHIGN. C207, H232, and E236 together coordinate Zn(2+). Residues 265-269 carry the 'KMSKS' region motif; the sequence is KMSKS. An ATP-binding site is contributed by K268.

Belongs to the class-I aminoacyl-tRNA synthetase family. In terms of assembly, monomer. Zn(2+) is required as a cofactor.

The protein resides in the cytoplasm. The enzyme catalyses tRNA(Cys) + L-cysteine + ATP = L-cysteinyl-tRNA(Cys) + AMP + diphosphate. The chain is Cysteine--tRNA ligase from Neorickettsia sennetsu (strain ATCC VR-367 / Miyayama) (Ehrlichia sennetsu).